The following is a 562-amino-acid chain: Arylsulfatase H (562 aa).

Residues Asp15, Asp16, and Cys55 each coordinate Ca(2+). Cys55 (nucleophile) is an active-site residue. A 3-oxoalanine (Cys) modification is found at Cys55. Residue Lys115 coordinates substrate. His117 is a catalytic residue. Transmembrane regions (helical) follow at residues 167-187 (LWIS…PKFA) and 189-209 (WFSV…LFFT). Substrate is bound at residue His271. Ca(2+) contacts are provided by Asp323 and Asn324. Residue Lys348 participates in substrate binding.

Belongs to the sulfatase family. Ca(2+) serves as cofactor. The conversion to 3-oxoalanine (also known as C-formylglycine, FGly), of a serine or cysteine residue in prokaryotes and of a cysteine residue in eukaryotes, is critical for catalytic activity.

It localises to the membrane. The sequence is that of Arylsulfatase H (ARSH) from Homo sapiens (Human).